The sequence spans 259 residues: Phosphatidylglycerol--prolipoprotein diacylglyceryl transferase (259 aa).

7 helical membrane-spanning segments follow: residues 9–29 (LGPL…ILAV), 48–68 (DFIL…YVIF), 83–103 (IWHG…VLFI), 114–133 (DFLD…GRWG), 167–187 (TPTF…IMIL), 197–217 (GEVA…IEGM), and 227–247 (LRVS…LIVI). Residue Arg-131 coordinates a 1,2-diacyl-sn-glycero-3-phospho-(1'-sn-glycerol).

This sequence belongs to the Lgt family.

Its subcellular location is the cell membrane. It catalyses the reaction L-cysteinyl-[prolipoprotein] + a 1,2-diacyl-sn-glycero-3-phospho-(1'-sn-glycerol) = an S-1,2-diacyl-sn-glyceryl-L-cysteinyl-[prolipoprotein] + sn-glycerol 1-phosphate + H(+). The protein operates within protein modification; lipoprotein biosynthesis (diacylglyceryl transfer). Catalyzes the transfer of the diacylglyceryl group from phosphatidylglycerol to the sulfhydryl group of the N-terminal cysteine of a prolipoprotein, the first step in the formation of mature lipoproteins. This Streptococcus mutans serotype c (strain ATCC 700610 / UA159) protein is Phosphatidylglycerol--prolipoprotein diacylglyceryl transferase.